A 34-amino-acid chain; its full sequence is U10-ctenitoxin-Pr1a (34 aa).

4 disulfides stabilise this stretch: Cys2–Cys15, Cys9–Cys20, Cys14–Cys31, and Cys22–Cys29.

As to expression, expressed by the venom gland.

It localises to the secreted. Its function is as follows. Non-toxic to mice and insects. The chain is U10-ctenitoxin-Pr1a from Phoneutria reidyi (Brazilian Amazonian armed spider).